The primary structure comprises 662 residues: High affinity sulfate transporter 2 (662 aa).

The disordered stretch occupies residues 1-35 (MSQRVSDQAMAEVIAETRTNSSSRRHGGGDDTPSL). Transmembrane regions (helical) follow at residues 103–123 (GDFI…LAYA), 128–148 (LDPW…AFMG), 153–173 (IAIG…SNEI), 182–202 (LRLA…LGVC), 205–225 (GFLI…GAAI), 264–284 (WETI…KYIA), 291–311 (FWVS…FVYI), 346–366 (AGVR…MAIG), 383–403 (MVAM…VTTG), 420–440 (VSNI…TPLF), 447–467 (VLAS…AMVL), and 481–501 (GAFF…AVAI). Positions 532–655 (QYPKAEQIPG…LTVADAVATY (124 aa)) constitute an STAS domain.

It belongs to the SLC26A/SulP transporter (TC 2.A.53) family.

Its subcellular location is the membrane. Its function is as follows. High-affinity H(+)/sulfate cotransporter that mediates the uptake of sulfate by plant roots from low concentrations of sulfate in the soil solution. This is High affinity sulfate transporter 2 (ST2) from Stylosanthes hamata (Caribbean stylo).